The chain runs to 891 residues: Protein kinase kin1 (891 aa).

A disordered region spans residues 65–116; the sequence is GYISPSSQSPHHGPVRSPSSRKPLPASPSRTRDHSLRVPVSGHSYSADEKPR. Positions 125–395 constitute a Protein kinase domain; it reads YVLGKTIGAG…LEEVLNHPWM (271 aa). Residues 131–139 and lysine 154 each bind ATP; that span reads IGAGSMGKV. Residue aspartate 266 is the Proton acceptor of the active site. Residue threonine 528 is modified to Phosphothreonine. Disordered stretches follow at residues 528–699, 728–747, and 805–841; these read TPVS…RNNR, TMGN…TDKL, and TPTK…LDDN. Composition is skewed to low complexity over residues 529–538 and 583–603; these read PVSSVPSSPV and HSPS…IFRR. A phosphoserine mark is found at serine 535 and serine 536. 5 stretches are compositionally biased toward polar residues: residues 612 to 629, 649 to 659, 669 to 699, 728 to 742, and 820 to 829; these read KSST…TSQS, LVTQSAIGRST, ISSQ…RNNR, TMGN…SPSK, and YGSNSTTDSY. A KA1 domain is found at 842–891; that stretch reads GESPASNLAFEIYIVKVPILSLRGVSFHRISGNSWQYKTLASRILNELKL.

This sequence belongs to the protein kinase superfamily. Ser/Thr protein kinase family.

It is found in the cytoplasm. The catalysed reaction is L-seryl-[protein] + ATP = O-phospho-L-seryl-[protein] + ADP + H(+). It catalyses the reaction L-threonyl-[protein] + ATP = O-phospho-L-threonyl-[protein] + ADP + H(+). In terms of biological role, has a role in establishing the characteristic rod cell shape. Important for cell polarity and is involved in directing growth to the cell ends. The chain is Protein kinase kin1 (kin1) from Schizosaccharomyces pombe (strain 972 / ATCC 24843) (Fission yeast).